Reading from the N-terminus, the 226-residue chain is Octanoyltransferase (226 aa).

The region spanning 34–216 (GEANELVWLL…AWTEAFGPVR (183 aa)) is the BPL/LPL catalytic domain. Substrate is bound by residues 73–80 (RGGEYTYH), 145–147 (AIG), and 158–160 (GIA). Residue Cys176 is the Acyl-thioester intermediate of the active site.

The protein belongs to the LipB family.

It localises to the cytoplasm. It catalyses the reaction octanoyl-[ACP] + L-lysyl-[protein] = N(6)-octanoyl-L-lysyl-[protein] + holo-[ACP] + H(+). It participates in protein modification; protein lipoylation via endogenous pathway; protein N(6)-(lipoyl)lysine from octanoyl-[acyl-carrier-protein]: step 1/2. Catalyzes the transfer of endogenously produced octanoic acid from octanoyl-acyl-carrier-protein onto the lipoyl domains of lipoate-dependent enzymes. Lipoyl-ACP can also act as a substrate although octanoyl-ACP is likely to be the physiological substrate. The chain is Octanoyltransferase from Maricaulis maris (strain MCS10) (Caulobacter maris).